We begin with the raw amino-acid sequence, 354 residues long: UDP-N-acetylglucosamine--N-acetylmuramyl-(pentapeptide) pyrophosphoryl-undecaprenol N-acetylglucosamine transferase (354 aa).

UDP-N-acetyl-alpha-D-glucosamine is bound by residues 15 to 17 (TGG), N127, R163, S191, I244, 263 to 268 (ALTVSE), and Q288.

The protein belongs to the glycosyltransferase 28 family. MurG subfamily.

The protein localises to the cell inner membrane. The catalysed reaction is di-trans,octa-cis-undecaprenyl diphospho-N-acetyl-alpha-D-muramoyl-L-alanyl-D-glutamyl-meso-2,6-diaminopimeloyl-D-alanyl-D-alanine + UDP-N-acetyl-alpha-D-glucosamine = di-trans,octa-cis-undecaprenyl diphospho-[N-acetyl-alpha-D-glucosaminyl-(1-&gt;4)]-N-acetyl-alpha-D-muramoyl-L-alanyl-D-glutamyl-meso-2,6-diaminopimeloyl-D-alanyl-D-alanine + UDP + H(+). The protein operates within cell wall biogenesis; peptidoglycan biosynthesis. Cell wall formation. Catalyzes the transfer of a GlcNAc subunit on undecaprenyl-pyrophosphoryl-MurNAc-pentapeptide (lipid intermediate I) to form undecaprenyl-pyrophosphoryl-MurNAc-(pentapeptide)GlcNAc (lipid intermediate II). This Aliivibrio salmonicida (strain LFI1238) (Vibrio salmonicida (strain LFI1238)) protein is UDP-N-acetylglucosamine--N-acetylmuramyl-(pentapeptide) pyrophosphoryl-undecaprenol N-acetylglucosamine transferase.